The following is a 510-amino-acid chain: uncharacterized protein (510 aa).

It belongs to the phage portal family. PBSX subfamily.

This is an uncharacterized protein from Bacillus subtilis (strain 168).